Consider the following 203-residue polypeptide: DNA-directed RNA polymerase subunit gamma (203 aa).

Cysteine 34, cysteine 36, cysteine 49, and cysteine 52 together coordinate Zn(2+).

The protein belongs to the RNA polymerase beta' chain family. RpoC1 subfamily. In terms of assembly, in cyanobacteria the RNAP catalytic core is composed of 2 alpha, 1 beta, 1 beta', 1 gamma and 1 omega subunit. When a sigma factor is associated with the core the holoenzyme is formed, which can initiate transcription. Zn(2+) serves as cofactor.

It catalyses the reaction RNA(n) + a ribonucleoside 5'-triphosphate = RNA(n+1) + diphosphate. DNA-dependent RNA polymerase catalyzes the transcription of DNA into RNA using the four ribonucleoside triphosphates as substrates. This chain is DNA-directed RNA polymerase subunit gamma (rpoC1), found in Prochlorothrix hollandica.